The chain runs to 143 residues: Large ribosomal subunit protein uL11 (143 aa).

This sequence belongs to the universal ribosomal protein uL11 family. In terms of assembly, part of the ribosomal stalk of the 50S ribosomal subunit. Interacts with L10 and the large rRNA to form the base of the stalk. L10 forms an elongated spine to which L12 dimers bind in a sequential fashion forming a multimeric L10(L12)X complex. Post-translationally, one or more lysine residues are methylated.

Forms part of the ribosomal stalk which helps the ribosome interact with GTP-bound translation factors. The polypeptide is Large ribosomal subunit protein uL11 (Pseudomonas savastanoi pv. phaseolicola (strain 1448A / Race 6) (Pseudomonas syringae pv. phaseolicola (strain 1448A / Race 6))).